Consider the following 94-residue polypeptide: Putative FXYD domain-containing ion transport regulator 8 (94 aa).

Positions 1–18 are cleaved as a signal peptide; it reads MEVVLIFVYSLLVPVVLA. The Extracellular portion of the chain corresponds to 19–34; it reads SAAKEKEIDPFHYNYQ. Residues 35–58 traverse the membrane as a helical segment; that stretch reads TLRIGGLVFDVVLFLVPSCHLLSH. Over 59 to 94 the chain is Cytoplasmic; that stretch reads RCKCSFNQKPQDPGDKEAQVENFITANAKEPQKAKN. The tract at residues 66–94 is disordered; that stretch reads QKPQDPGDKEAQVENFITANAKEPQKAKN.

It belongs to the FXYD family.

It localises to the membrane. The protein is Putative FXYD domain-containing ion transport regulator 8 (FXYD6P3) of Homo sapiens (Human).